The chain runs to 238 residues: Outer membrane protein A (238 aa).

The next 5 beta stranded transmembrane spans lie at 1–8, 13–21, 43–52, 57–64, and 83–91; these read LTAKLGYP, LDIYTRLGG, PVFAGGVEYA, IATRLEYQ, and LLSVGVSYR. Repeat copies occupy residues 104–105, 106–107, and 108–109. The tract at residues 104–109 is 3 X 2 AA tandem repeats of A-P; sequence APAPAP. The OmpA-like domain maps to 111–238; sequence VQTKHFTLKS…RRVEIEVKGI (128 aa). Residues C212 and C224 are joined by a disulfide bond.

The protein belongs to the outer membrane OOP (TC 1.B.6) superfamily. OmpA family. Monomer and homodimer.

Its subcellular location is the cell outer membrane. Functionally, with TolR probably plays a role in maintaining the position of the peptidoglycan cell wall in the periplasm. Acts as a porin with low permeability that allows slow penetration of small solutes; an internal gate slows down solute passage. In Citrobacter freundii, this protein is Outer membrane protein A.